Here is a 495-residue protein sequence, read N- to C-terminus: UDP-glycosyltransferase 73C12 (495 aa).

Histidine 24 serves as the catalytic Proton acceptor. Residue histidine 24 participates in an anthocyanidin binding. Aspartate 129 functions as the Charge relay in the catalytic mechanism. Alanine 356, glutamine 358, histidine 373, tryptophan 376, asparagine 377, serine 378, and glutamate 381 together coordinate UDP-alpha-D-glucose. Alanine 396 is a binding site for an anthocyanidin. Residues aspartate 397 and glutamine 398 each contribute to the UDP-alpha-D-glucose site.

The protein belongs to the UDP-glycosyltransferase family.

It carries out the reaction oleanolate + UDP-alpha-D-glucose = oleanolate 3-O-beta-D-glucoside + UDP + H(+). Its function is as follows. Catalyzes the transfer of a glucose (Glc) moiety from UDP-Glc to the C-3 position of the oleanane sapogenins oleanolate and hederagenin, and to the C-28 carboxylic group of the lupane sapogenin betulinate. The monoglucosylated hederagenin 3-O-beta-D-glucoside is a feeding deterrent of the yellow-striped flea beetle (Phyllotreta nemorum). The sequence is that of UDP-glycosyltransferase 73C12 from Barbarea vulgaris (Yellow rocket).